Here is a 286-residue protein sequence, read N- to C-terminus: ATP synthase gamma chain (286 aa).

This sequence belongs to the ATPase gamma chain family. In terms of assembly, F-type ATPases have 2 components, CF(1) - the catalytic core - and CF(0) - the membrane proton channel. CF(1) has five subunits: alpha(3), beta(3), gamma(1), delta(1), epsilon(1). CF(0) has three main subunits: a, b and c.

The protein localises to the cell inner membrane. Functionally, produces ATP from ADP in the presence of a proton gradient across the membrane. The gamma chain is believed to be important in regulating ATPase activity and the flow of protons through the CF(0) complex. In Solibacter usitatus (strain Ellin6076), this protein is ATP synthase gamma chain.